Here is a 233-residue protein sequence, read N- to C-terminus: MIAWLDEDEPFPPVEQALTEPSGLLAASADLPVSRLVTAYRRGIFPWFNPGEPVLWWSPDPRMVLYPAELHVPRSLEKVLRHRRYTVTVDRAFGSVIRACAAPTPARPASWITPEIISTYSQLYRLGLAHSVETWIDGQLAGGFYGVMIGRMFYGESMFAQAPDASKIAFAHLMRRFAGHGIDMIDCQMHTAHLARFGGREIPRSDFVATVNTLTAQPAPPDLWRWSHCNEPA.

This sequence belongs to the L/F-transferase family.

The protein localises to the cytoplasm. The catalysed reaction is N-terminal L-lysyl-[protein] + L-leucyl-tRNA(Leu) = N-terminal L-leucyl-L-lysyl-[protein] + tRNA(Leu) + H(+). The enzyme catalyses N-terminal L-arginyl-[protein] + L-leucyl-tRNA(Leu) = N-terminal L-leucyl-L-arginyl-[protein] + tRNA(Leu) + H(+). It carries out the reaction L-phenylalanyl-tRNA(Phe) + an N-terminal L-alpha-aminoacyl-[protein] = an N-terminal L-phenylalanyl-L-alpha-aminoacyl-[protein] + tRNA(Phe). Functions in the N-end rule pathway of protein degradation where it conjugates Leu, Phe and, less efficiently, Met from aminoacyl-tRNAs to the N-termini of proteins containing an N-terminal arginine or lysine. The sequence is that of Leucyl/phenylalanyl-tRNA--protein transferase from Laribacter hongkongensis (strain HLHK9).